A 376-amino-acid chain; its full sequence is Queuine tRNA-ribosyltransferase (376 aa).

D92 (proton acceptor) is an active-site residue. Residues 92–96 (DSGGF), D146, Q190, and G217 contribute to the substrate site. Residues 248–254 (GVGRPED) form an RNA binding region. D267 serves as the catalytic Nucleophile. The RNA binding; important for wobble base 34 recognition stretch occupies residues 272–276 (TRNAR). C305, C307, C310, and H337 together coordinate Zn(2+).

This sequence belongs to the queuine tRNA-ribosyltransferase family. As to quaternary structure, homodimer. Within each dimer, one monomer is responsible for RNA recognition and catalysis, while the other monomer binds to the replacement base PreQ1. The cofactor is Zn(2+).

The catalysed reaction is 7-aminomethyl-7-carbaguanine + guanosine(34) in tRNA = 7-aminomethyl-7-carbaguanosine(34) in tRNA + guanine. It functions in the pathway tRNA modification; tRNA-queuosine biosynthesis. Functionally, catalyzes the base-exchange of a guanine (G) residue with the queuine precursor 7-aminomethyl-7-deazaguanine (PreQ1) at position 34 (anticodon wobble position) in tRNAs with GU(N) anticodons (tRNA-Asp, -Asn, -His and -Tyr). Catalysis occurs through a double-displacement mechanism. The nucleophile active site attacks the C1' of nucleotide 34 to detach the guanine base from the RNA, forming a covalent enzyme-RNA intermediate. The proton acceptor active site deprotonates the incoming PreQ1, allowing a nucleophilic attack on the C1' of the ribose to form the product. After dissociation, two additional enzymatic reactions on the tRNA convert PreQ1 to queuine (Q), resulting in the hypermodified nucleoside queuosine (7-(((4,5-cis-dihydroxy-2-cyclopenten-1-yl)amino)methyl)-7-deazaguanosine). This is Queuine tRNA-ribosyltransferase from Stenotrophomonas maltophilia (strain R551-3).